The sequence spans 61 residues: MAVPKRKTSPSKRGMRRSADALKAPTYIEDKNSGELRRPHHIDLKTGMYRGRQVLTPKENA.

Residues 1-16 (MAVPKRKTSPSKRGMR) show a composition bias toward basic residues. Residues 1 to 39 (MAVPKRKTSPSKRGMRRSADALKAPTYIEDKNSGELRRP) form a disordered region. Over residues 28-39 (IEDKNSGELRRP) the composition is skewed to basic and acidic residues.

This sequence belongs to the bacterial ribosomal protein bL32 family.

The protein is Large ribosomal subunit protein bL32 of Rhizobium meliloti (strain 1021) (Ensifer meliloti).